The chain runs to 272 residues: Shikimate dehydrogenase (NADP(+)) (272 aa).

Shikimate-binding positions include 14–16 (SKS) and T61. Residue K65 is the Proton acceptor of the active site. NADP(+) is bound at residue E77. Shikimate is bound by residues N86 and D102. NADP(+)-binding positions include 126-130 (GAGGA), 149-154 (NRTASR), and M213. A shikimate-binding site is contributed by Y215. G237 lines the NADP(+) pocket.

It belongs to the shikimate dehydrogenase family. Homodimer.

The catalysed reaction is shikimate + NADP(+) = 3-dehydroshikimate + NADPH + H(+). The protein operates within metabolic intermediate biosynthesis; chorismate biosynthesis; chorismate from D-erythrose 4-phosphate and phosphoenolpyruvate: step 4/7. Its function is as follows. Involved in the biosynthesis of the chorismate, which leads to the biosynthesis of aromatic amino acids. Catalyzes the reversible NADPH linked reduction of 3-dehydroshikimate (DHSA) to yield shikimate (SA). In Salmonella schwarzengrund (strain CVM19633), this protein is Shikimate dehydrogenase (NADP(+)).